The chain runs to 295 residues: NAD kinase (295 aa).

The active-site Proton acceptor is Asp-74. Residues 74–75 (DG), 148–149 (ND), His-159, Arg-176, Asp-178, and 189–194 (TAYALS) each bind NAD(+).

The protein belongs to the NAD kinase family. Requires a divalent metal cation as cofactor.

It localises to the cytoplasm. It catalyses the reaction NAD(+) + ATP = ADP + NADP(+) + H(+). Involved in the regulation of the intracellular balance of NAD and NADP, and is a key enzyme in the biosynthesis of NADP. Catalyzes specifically the phosphorylation on 2'-hydroxyl of the adenosine moiety of NAD to yield NADP. The polypeptide is NAD kinase (Legionella pneumophila (strain Corby)).